The primary structure comprises 105 residues: Intermembrane phospholipid transport system binding protein MlaB (105 aa).

The STAS domain occupies W4–I105.

The complex is composed of two ATP-binding proteins (MlaF), two transmembrane proteins (MlaE), two cytoplasmic solute-binding proteins (MlaB) and six periplasmic solute-binding proteins (MlaD).

The protein resides in the cytoplasm. Its function is as follows. Part of the ABC transporter complex MlaFEDB, which is involved in a phospholipid transport pathway that maintains lipid asymmetry in the outer membrane by retrograde trafficking of phospholipids from the outer membrane to the inner membrane. MlaB plays critical roles in both the assembly and activity of the complex. May act by modulating MlaF structure and stability. The sequence is that of Intermembrane phospholipid transport system binding protein MlaB from Haemophilus influenzae (strain ATCC 51907 / DSM 11121 / KW20 / Rd).